A 727-amino-acid polypeptide reads, in one-letter code: Endothelin-converting enzyme homolog (727 aa).

Residues 1–44 are Cytoplasmic-facing; the sequence is MSFNFSRYSGAYTTTFSFLLLALLIVSAVLLSRPYAPALLHAEE. The helical; Signal-anchor for type II membrane protein transmembrane segment at 45-65 threads the bilayer; the sequence is AYCVSMSCVTAAASVLSLMDA. Residues 46 to 727 form the Peptidase M13 domain; it reads YCVSMSCVTA…MNPVHKCEVW (682 aa). Disulfide bonds link Cys47–Cys52, Cys70–Cys712, Cys78–Cys672, Cys134–Cys392, and Cys601–Cys724. Topologically, residues 66 to 727 are extracellular; it reads TADPCSDFYQ…MNPVHKCEVW (662 aa). N-linked (GlcNAc...) asparagine glycosylation is found at Asn138, Asn160, Asn164, Asn169, Asn222, Asn309, Asn337, Asn340, and Asn511. Residue His564 participates in Zn(2+) binding. The active site involves Glu565. His568 provides a ligand contact to Zn(2+). Residues Asn589 and Asn608 are each glycosylated (N-linked (GlcNAc...) asparagine). Residue Glu624 participates in Zn(2+) binding. Asp628 acts as the Proton donor in catalysis. N-linked (GlcNAc...) asparagine glycosylation is present at Asn656.

It belongs to the peptidase M13 family. Zn(2+) serves as cofactor. Highly expressed in brain and midgut, and to a lesser extent in fat body, ovaries, testes and haemocytes.

The protein localises to the cell membrane. This is Endothelin-converting enzyme homolog from Locusta migratoria (Migratory locust).